A 142-amino-acid polypeptide reads, in one-letter code: Transcriptional regulator MraZ (142 aa).

2 consecutive SpoVT-AbrB domains span residues 5–48 (EFEY…PLCE) and 77–120 (AFDV…DKET).

This sequence belongs to the MraZ family. Forms oligomers.

It is found in the cytoplasm. The protein resides in the nucleoid. The sequence is that of Transcriptional regulator MraZ from Dehalococcoides mccartyi (strain ATCC BAA-2266 / KCTC 15142 / 195) (Dehalococcoides ethenogenes (strain 195)).